The following is a 135-amino-acid chain: Small ribosomal subunit protein uS17 (135 aa).

A disordered region spans residues 1–59 (MAEAKTGAKAAPRVAKAAKAAPKKAAPNDAEAIGAANAANVKGPKHTPRTPKPRGRRKT). Residues 8–42 (AKAAPRVAKAAKAAPKKAAPNDAEAIGAANAANVK) are compositionally biased toward low complexity. Positions 43-59 (GPKHTPRTPKPRGRRKT) are enriched in basic residues.

Belongs to the universal ribosomal protein uS17 family. In terms of assembly, part of the 30S ribosomal subunit.

Its function is as follows. One of the primary rRNA binding proteins, it binds specifically to the 5'-end of 16S ribosomal RNA. In Mycobacterium bovis (strain ATCC BAA-935 / AF2122/97), this protein is Small ribosomal subunit protein uS17.